The following is a 775-amino-acid chain: Subtilisin-like protease SBT1.2 (775 aa).

An N-terminal signal peptide occupies residues 1 to 20 (MEPKPFFLCIIFLLFCSSSS). In terms of domain architecture, Inhibitor I9 spans 27–111 (TYIVQLHPNS…AVRPDHVLQV (85 aa)). Positions 116–618 (SYKFLGLDGF…AGHVNPQKAI (503 aa)) constitute a Peptidase S8 domain. Active-site charge relay system residues include Asp146 and His222. Residues 388 to 470 (GGDKGSEFCL…YTESVLLKAY (83 aa)) enclose the PA domain. Residues Asn472 and Asn544 are each glycosylated (N-linked (GlcNAc...) asparagine). Ser552 functions as the Charge relay system in the catalytic mechanism. Asn652 carries an N-linked (GlcNAc...) asparagine glycan.

This sequence belongs to the peptidase S8 family. In terms of tissue distribution, mostly expressed in leaves and cotyledons (especially in epidermal cells), and, to a lower extent, in floral buds, stems, and siliques. Strongly expressed in stomatal precursor cells (meristemoids and guard mother cells).

The protein localises to the secreted. It localises to the extracellular space. It is found in the apoplast. The protein resides in the cell membrane. Functionally, serine protease involved in the negative regulation of stomatal density and distribution. Not active on EPFL6 (AC Q1PEY6). Positive regulator of water use efficiency (WUE). The protein is Subtilisin-like protease SBT1.2 of Arabidopsis thaliana (Mouse-ear cress).